The chain runs to 408 residues: LysM domain-containing protein ARB_01488 (408 aa).

The N-terminal stretch at 1 to 17 (MVKYALLPLVAVSLVQA) is a signal peptide. The 50-residue stretch at 42–91 (SWINVVDASGKLTCDAFLDTINVAKRQFIFWNPQLNSDCSNIQSKASYCA) folds into the LysM 1 domain. The disordered stretch occupies residues 98 to 178 (SKQTRGQMDP…HGPKEAPPPD (81 aa)). The span at 106–116 (DPPPKTKPLPP) shows a compositional bias: pro residues. 2 LysM domains span residues 270-320 (QYHT…RVCV) and 360-406 (SFEL…YACV).

It is found in the secreted. Might have a role in sequestration of chitin oligosaccharides (breakdown products of fungal cell walls that are released during invasion and act as triggers of host immunity) to dampen host defense. The polypeptide is LysM domain-containing protein ARB_01488 (Arthroderma benhamiae (strain ATCC MYA-4681 / CBS 112371) (Trichophyton mentagrophytes)).